The primary structure comprises 645 residues: 1,4-alpha-glucan branching enzyme GlgB (645 aa).

The active-site Nucleophile is the D309. The Proton donor role is filled by E352. The segment at 619 to 645 is disordered; sequence VKTRKGSKKQDGSKTKVRSNVTSRGKR. The segment covering 636-645 has biased composition (polar residues); it reads RSNVTSRGKR.

It belongs to the glycosyl hydrolase 13 family. GlgB subfamily. Monomer.

It carries out the reaction Transfers a segment of a (1-&gt;4)-alpha-D-glucan chain to a primary hydroxy group in a similar glucan chain.. It participates in glycan biosynthesis; glycogen biosynthesis. Catalyzes the formation of the alpha-1,6-glucosidic linkages in glycogen by scission of a 1,4-alpha-linked oligosaccharide from growing alpha-1,4-glucan chains and the subsequent attachment of the oligosaccharide to the alpha-1,6 position. The polypeptide is 1,4-alpha-glucan branching enzyme GlgB (Bacillus cereus (strain ATCC 10987 / NRS 248)).